We begin with the raw amino-acid sequence, 1486 residues long: Chromosome partition protein MukB (1486 aa).

An ATP-binding site is contributed by 34-41 (GGNGAGKS). 3 coiled-coil regions span residues 326–418 (LEAD…QYNQ), 444–480 (LETFQAKELEATEKMLSLEQKMSMAQTAHSQFEQAYQ), and 509–603 (RHLA…RAPV). Residues 666 to 783 (PGGSEDQRLN…EVPLFGRAAR (118 aa)) are flexible hinge. Coiled coils occupy residues 835-923 (EAEI…AKLE), 977-1115 (EMLS…TAKA), and 1209-1266 (VEAI…QNVS).

Belongs to the SMC family. MukB subfamily. Homodimerization via its hinge domain. Binds to DNA via its C-terminal region. Interacts, and probably forms a ternary complex, with MukE and MukF via its C-terminal region. The complex formation is stimulated by calcium or magnesium. Interacts with tubulin-related protein FtsZ.

The protein localises to the cytoplasm. It is found in the nucleoid. In terms of biological role, plays a central role in chromosome condensation, segregation and cell cycle progression. Functions as a homodimer, which is essential for chromosome partition. Involved in negative DNA supercoiling in vivo, and by this means organize and compact chromosomes. May achieve or facilitate chromosome segregation by condensation DNA from both sides of a centrally located replisome during cell division. This chain is Chromosome partition protein MukB, found in Shigella boydii serotype 18 (strain CDC 3083-94 / BS512).